The chain runs to 544 residues: Methionine--tRNA ligase (544 aa).

The 'HIGH' region signature appears at 10–20 (PYANGSLHLGH). Residues C141, C144, C153, and C156 each contribute to the Zn(2+) site. The 'KMSKS' region motif lies at 329–333 (KLSTS). T332 provides a ligand contact to ATP.

It belongs to the class-I aminoacyl-tRNA synthetase family. MetG type 1 subfamily. In terms of assembly, monomer. Requires Zn(2+) as cofactor.

It localises to the cytoplasm. The catalysed reaction is tRNA(Met) + L-methionine + ATP = L-methionyl-tRNA(Met) + AMP + diphosphate. Its function is as follows. Is required not only for elongation of protein synthesis but also for the initiation of all mRNA translation through initiator tRNA(fMet) aminoacylation. This chain is Methionine--tRNA ligase, found in Bacillus cereus (strain 03BB102).